The following is a 100-amino-acid chain: Aspartyl/glutamyl-tRNA(Asn/Gln) amidotransferase subunit C (100 aa).

The protein belongs to the GatC family. Heterotrimer of A, B and C subunits.

The catalysed reaction is L-glutamyl-tRNA(Gln) + L-glutamine + ATP + H2O = L-glutaminyl-tRNA(Gln) + L-glutamate + ADP + phosphate + H(+). It carries out the reaction L-aspartyl-tRNA(Asn) + L-glutamine + ATP + H2O = L-asparaginyl-tRNA(Asn) + L-glutamate + ADP + phosphate + 2 H(+). Allows the formation of correctly charged Asn-tRNA(Asn) or Gln-tRNA(Gln) through the transamidation of misacylated Asp-tRNA(Asn) or Glu-tRNA(Gln) in organisms which lack either or both of asparaginyl-tRNA or glutaminyl-tRNA synthetases. The reaction takes place in the presence of glutamine and ATP through an activated phospho-Asp-tRNA(Asn) or phospho-Glu-tRNA(Gln). This Staphylococcus saprophyticus subsp. saprophyticus (strain ATCC 15305 / DSM 20229 / NCIMB 8711 / NCTC 7292 / S-41) protein is Aspartyl/glutamyl-tRNA(Asn/Gln) amidotransferase subunit C.